We begin with the raw amino-acid sequence, 324 residues long: Ribose-phosphate pyrophosphokinase (324 aa).

Residues 45–47 (NGE) and 104–105 (RQ) each bind ATP. Mg(2+)-binding residues include H138 and D178. K201 is an active-site residue. Residues R203, D229, and 233-237 (DTGGT) contribute to the D-ribose 5-phosphate site.

The protein belongs to the ribose-phosphate pyrophosphokinase family. Class I subfamily. As to quaternary structure, homohexamer. Requires Mg(2+) as cofactor.

Its subcellular location is the cytoplasm. It catalyses the reaction D-ribose 5-phosphate + ATP = 5-phospho-alpha-D-ribose 1-diphosphate + AMP + H(+). It participates in metabolic intermediate biosynthesis; 5-phospho-alpha-D-ribose 1-diphosphate biosynthesis; 5-phospho-alpha-D-ribose 1-diphosphate from D-ribose 5-phosphate (route I): step 1/1. In terms of biological role, involved in the biosynthesis of the central metabolite phospho-alpha-D-ribosyl-1-pyrophosphate (PRPP) via the transfer of pyrophosphoryl group from ATP to 1-hydroxyl of ribose-5-phosphate (Rib-5-P). In Streptomyces avermitilis (strain ATCC 31267 / DSM 46492 / JCM 5070 / NBRC 14893 / NCIMB 12804 / NRRL 8165 / MA-4680), this protein is Ribose-phosphate pyrophosphokinase.